Here is a 213-residue protein sequence, read N- to C-terminus: Isomeliandiol synthase MOI2 (213 aa).

5 consecutive transmembrane segments (helical) span residues 18-38 (AALH…SWFI), 52-72 (VLCW…YYVF), 109-129 (IESM…YALA), 137-157 (ILQF…FLSA), and 171-191 (YWAY…LIAI). An EXPERA domain is found at 48–190 (MDRVVLCWWA…IWVIVPALIA (143 aa)).

This sequence belongs to the EBP family. In terms of tissue distribution, mainly expressed in petioles.

Its subcellular location is the membrane. The catalysed reaction is 7,8-epoxymelianol = isomeliandiol. It participates in secondary metabolite biosynthesis; terpenoid biosynthesis. Functionally, isomerase involved in the biosynthesis of limonoids triterpene natural products such as azadirachtin, an antifeedant widely used as bioinsecticide, and possessing many medicinal applications including anti-tumoral, anti-malarial, anti-rheumatic, antibacterial, anti-inflammatory, anti-pyretic and diuretic effects. Catalyzes the conversion of 7,8-epoxymelianol to isomeliandiol via skeletal rearrangements. The protein is Isomeliandiol synthase MOI2 of Melia azedarach (Chinaberry tree).